The following is a 229-amino-acid chain: Lipoprotein-releasing system ATP-binding protein LolD (229 aa).

In terms of domain architecture, ABC transporter spans 6 to 229 (LELDAIERTY…DGHLTPYVPA (224 aa)). 42–49 (GPSGSGKS) is an ATP binding site.

It belongs to the ABC transporter superfamily. Lipoprotein translocase (TC 3.A.1.125) family. As to quaternary structure, the complex is composed of two ATP-binding proteins (LolD) and two transmembrane proteins (LolC and LolE).

Its subcellular location is the cell inner membrane. In terms of biological role, part of the ABC transporter complex LolCDE involved in the translocation of mature outer membrane-directed lipoproteins, from the inner membrane to the periplasmic chaperone, LolA. Responsible for the formation of the LolA-lipoprotein complex in an ATP-dependent manner. The protein is Lipoprotein-releasing system ATP-binding protein LolD of Maricaulis maris (strain MCS10) (Caulobacter maris).